The primary structure comprises 196 residues: MSFIRSALAAAAFVALSIGAVQTASAADPENTVILKLKDGDVALEIRPDLAPKHVAQIKKLVREGAYNGVAFHRVIPGFMAQTGDVKFGNMDKGFDAARVGTGGSNYPDLPAEFSKEPFVRGTVGMARSQNPNSANSQFFIMFDDGPFLNGQYTVVGKVVSGMDAVDKIKKGSEAENGAVKNPDKIIKATIEADTK.

An N-terminal signal peptide occupies residues 1 to 26 (MSFIRSALAAAAFVALSIGAVQTASA). In terms of domain architecture, PPIase cyclophilin-type spans 29–194 (PENTVILKLK…KIIKATIEAD (166 aa)).

The protein belongs to the cyclophilin-type PPIase family.

It is found in the periplasm. The catalysed reaction is [protein]-peptidylproline (omega=180) = [protein]-peptidylproline (omega=0). Its function is as follows. PPIases accelerate the folding of proteins. It catalyzes the cis-trans isomerization of proline imidic peptide bonds in oligopeptides. The chain is Probable peptidyl-prolyl cis-trans isomerase (ppi) from Brucella abortus (strain 2308).